Reading from the N-terminus, the 248-residue chain is Coenzyme F420:L-glutamate ligase (248 aa).

GTP is bound by residues 15–18, 45–46, and Lys50; these read IPLI and ET. An a divalent metal cation-binding site is contributed by Asp115. GTP is bound at residue Asn118. Asp155, Ser156, and Gln213 together coordinate a divalent metal cation. 211 to 218 serves as a coordination point for GTP; sequence MGQSDEGI.

It belongs to the CofE family. As to quaternary structure, homodimer. Mg(2+) is required as a cofactor. It depends on Mn(2+) as a cofactor. K(+) serves as cofactor.

The catalysed reaction is oxidized coenzyme F420-0 + GTP + L-glutamate = oxidized coenzyme F420-1 + GDP + phosphate + H(+). It carries out the reaction oxidized coenzyme F420-1 + GTP + L-glutamate = oxidized coenzyme F420-2 + GDP + phosphate + H(+). It functions in the pathway cofactor biosynthesis; coenzyme F420 biosynthesis. Catalyzes the GTP-dependent successive addition of two or more gamma-linked L-glutamates to the L-lactyl phosphodiester of 7,8-didemethyl-8-hydroxy-5-deazariboflavin (F420-0) to form coenzyme F420-0-glutamyl-glutamate (F420-2) or polyglutamated F420 derivatives. The chain is Coenzyme F420:L-glutamate ligase from Methanococcus maripaludis (strain C6 / ATCC BAA-1332).